Here is a 206-residue protein sequence, read N- to C-terminus: Small ribosomal subunit protein uS7 (206 aa).

This sequence belongs to the universal ribosomal protein uS7 family. As to quaternary structure, component of the small ribosomal subunit.

It localises to the cytoplasm. Functionally, component of the small ribosomal subunit. The ribosome is a large ribonucleoprotein complex responsible for the synthesis of proteins in the cell. This Entamoeba histolytica (strain ATCC 30459 / HM-1:IMSS / ABRM) protein is Small ribosomal subunit protein uS7.